The chain runs to 188 residues: Elongation factor P (188 aa).

It belongs to the elongation factor P family.

Its subcellular location is the cytoplasm. The protein operates within protein biosynthesis; polypeptide chain elongation. In terms of biological role, involved in peptide bond synthesis. Stimulates efficient translation and peptide-bond synthesis on native or reconstituted 70S ribosomes in vitro. Probably functions indirectly by altering the affinity of the ribosome for aminoacyl-tRNA, thus increasing their reactivity as acceptors for peptidyl transferase. The chain is Elongation factor P from Rickettsia bellii (strain OSU 85-389).